The primary structure comprises 1493 residues: Sister chromatid cohesion protein 2 (1493 aa).

Phosphoserine; in mutant scc2-8A is present on S43. The residue at position 67 (T67) is a Phosphothreonine. A Phosphoserine; in mutant scc2-8A modification is found at S74. 2 positions are modified to phosphoserine: S127 and S157. Residues S151–S170 are disordered. S162 bears the Phosphoserine; in mutant scc2-8A mark. At S163 the chain carries Phosphoserine. 2 positions are modified to phosphothreonine: T231 and T236. 2 positions are modified to phosphoserine: S305 and S320. T360 bears the Phosphothreonine; in mutant scc2-8A mark. HEAT repeat units lie at residues N695–V732, L734–F771, T806–E843, and F1132–R1169. At S753 the chain carries Phosphoserine. S1179 carries the post-translational modification Phosphoserine; in mutant scc2-8A. S1182 bears the Phosphoserine mark. Phosphoserine; in mutant scc2-8A is present on S1183. S1185 is subject to Phosphoserine. One copy of the HEAT 5 repeat lies at T1244 to T1281.

It belongs to the SCC2/Nipped-B family. Interacts with SCC4. Interacts with the cohesin complex, which is composed of: the SMC1 and SMC3 heterodimer attached via their hinge domain, MCD1/SCC1 which link them, and IRR1/SCC3, which interacts with MCD1. In terms of processing, phosphorylated at alternative sites Ser-43, Ser-74, Ser-162, Thr-360, Ser-1179 and Ser-1183 when the principal phosphorylation sites Thr-67, Ser-127, Ser-157, Ser-163, Thr-231, Thr-236, Ser-305 and Ser-320 are mutated to alanines.

It is found in the nucleus. Its subcellular location is the chromosome. The protein localises to the centromere. Functionally, plays a structural role in chromatin and is involved in sister chromatid cohesion. Forms a complex with SCC4 required for the stable association of the cohesin complex with chromatin, which may act by hydrolyzing ATP from SMC1 and SMC3 heads. Binds to the nucleosome-free promoter regions of ribosomal protein genes and tRNA genes. Involved in transcriptional regulation by cooperating with the RSC complex to maintain nucleosome exhaustion at its binding sites. This chain is Sister chromatid cohesion protein 2 (SCC2), found in Saccharomyces cerevisiae (strain ATCC 204508 / S288c) (Baker's yeast).